A 146-amino-acid polypeptide reads, in one-letter code: Oxygen-independent coproporphyrinogen III oxidase (146 aa).

Tyrosine 54 contributes to the S-adenosyl-L-methionine binding site. 2 residues coordinate [4Fe-4S] cluster: cysteine 60 and cysteine 64. Phenylalanine 66 contacts S-adenosyl-L-methionine. Position 67 (cysteine 67) interacts with [4Fe-4S] cluster. S-adenosyl-L-methionine is bound by residues 111 to 112 and glutamate 143; that span reads GT.

The protein belongs to the anaerobic coproporphyrinogen-III oxidase family. Monomer. [4Fe-4S] cluster is required as a cofactor.

The protein localises to the cytoplasm. The enzyme catalyses coproporphyrinogen III + 2 S-adenosyl-L-methionine = protoporphyrinogen IX + 2 5'-deoxyadenosine + 2 L-methionine + 2 CO2. Its pathway is porphyrin-containing compound metabolism; protoporphyrin-IX biosynthesis; protoporphyrinogen-IX from coproporphyrinogen-III (AdoMet route): step 1/1. Functionally, involved in the heme biosynthesis. Catalyzes the anaerobic oxidative decarboxylation of propionate groups of rings A and B of coproporphyrinogen III to yield the vinyl groups in protoporphyrinogen IX. The polypeptide is Oxygen-independent coproporphyrinogen III oxidase (hemN) (Mannheimia haemolytica (Pasteurella haemolytica)).